We begin with the raw amino-acid sequence, 225 residues long: UPF0758 protein XC_3944 (225 aa).

An MPN domain is found at 102–224 (ALSDPSSVGR…PVSLAERGWV (123 aa)). Residues histidine 173, histidine 175, and aspartate 186 each contribute to the Zn(2+) site. Positions 173–186 (HNHPSGNPEPSEAD) match the JAMM motif motif.

Belongs to the UPF0758 family.

The chain is UPF0758 protein XC_3944 from Xanthomonas campestris pv. campestris (strain 8004).